A 222-amino-acid polypeptide reads, in one-letter code: Probable transaldolase (222 aa).

Lysine 91 serves as the catalytic Schiff-base intermediate with substrate.

Belongs to the transaldolase family. Type 3B subfamily.

It localises to the cytoplasm. It catalyses the reaction D-sedoheptulose 7-phosphate + D-glyceraldehyde 3-phosphate = D-erythrose 4-phosphate + beta-D-fructose 6-phosphate. It functions in the pathway carbohydrate degradation; pentose phosphate pathway; D-glyceraldehyde 3-phosphate and beta-D-fructose 6-phosphate from D-ribose 5-phosphate and D-xylulose 5-phosphate (non-oxidative stage): step 2/3. Functionally, transaldolase is important for the balance of metabolites in the pentose-phosphate pathway. The polypeptide is Probable transaldolase (Pelodictyon phaeoclathratiforme (strain DSM 5477 / BU-1)).